Reading from the N-terminus, the 210-residue chain is Cdc42 effector protein 2 (210 aa).

At Ser-2 the chain carries N-acetylserine. The 15-residue stretch at 30-44 (ISPPLGDFRHTIHIG) folds into the CRIB domain. Residues Ser-31, Ser-101, and Ser-141 each carry the phosphoserine modification. Residues 122–171 (PTAQAPPKPPRLHLETPQPSPQEGGSVDIWRIPETGSPNSGLTPESGAEE) form a disordered region.

The protein belongs to the BORG/CEP family. Interacts with RHOQ and CDC42 in a GTP-dependent manner, and with SEPT7. As to expression, highly expressed in the heart. Weakly expressed in the pancreas and liver.

The protein resides in the endomembrane system. It localises to the cytoplasm. The protein localises to the cytoskeleton. Probably involved in the organization of the actin cytoskeleton. May act downstream of CDC42 to induce actin filament assembly leading to cell shape changes. Induces pseudopodia formation in fibroblasts in a CDC42-dependent manner. In Homo sapiens (Human), this protein is Cdc42 effector protein 2 (CDC42EP2).